Consider the following 484-residue polypeptide: Glutamyl-tRNA(Gln) amidotransferase subunit A (484 aa).

Catalysis depends on charge relay system residues Lys-77 and Ser-152. The active-site Acyl-ester intermediate is Ser-176.

Belongs to the amidase family. GatA subfamily. Heterotrimer of A, B and C subunits.

The enzyme catalyses L-glutamyl-tRNA(Gln) + L-glutamine + ATP + H2O = L-glutaminyl-tRNA(Gln) + L-glutamate + ADP + phosphate + H(+). Allows the formation of correctly charged Gln-tRNA(Gln) through the transamidation of misacylated Glu-tRNA(Gln) in organisms which lack glutaminyl-tRNA synthetase. The reaction takes place in the presence of glutamine and ATP through an activated gamma-phospho-Glu-tRNA(Gln). This Pseudomonas aeruginosa (strain ATCC 15692 / DSM 22644 / CIP 104116 / JCM 14847 / LMG 12228 / 1C / PRS 101 / PAO1) protein is Glutamyl-tRNA(Gln) amidotransferase subunit A.